A 438-amino-acid polypeptide reads, in one-letter code: tRNA modification GTPase MnmE (438 aa).

Residues R20, E78, and K117 each contribute to the (6S)-5-formyl-5,6,7,8-tetrahydrofolate site. Residues 214–359 (GIRVLIIGKP…LIDEIKKLFY (146 aa)) enclose the TrmE-type G domain. A K(+)-binding site is contributed by N224. GTP contacts are provided by residues 224–229 (NVGKST), 243–249 (TDIPGTT), and 268–271 (DTAG). S228 is a Mg(2+) binding site. T243, I245, and T248 together coordinate K(+). T249 is a binding site for Mg(2+). K438 is a (6S)-5-formyl-5,6,7,8-tetrahydrofolate binding site.

Belongs to the TRAFAC class TrmE-Era-EngA-EngB-Septin-like GTPase superfamily. TrmE GTPase family. In terms of assembly, homodimer. Heterotetramer of two MnmE and two MnmG subunits. It depends on K(+) as a cofactor.

Its subcellular location is the cytoplasm. Functionally, exhibits a very high intrinsic GTPase hydrolysis rate. Involved in the addition of a carboxymethylaminomethyl (cmnm) group at the wobble position (U34) of certain tRNAs, forming tRNA-cmnm(5)s(2)U34. This chain is tRNA modification GTPase MnmE, found in Ureaplasma parvum serovar 3 (strain ATCC 27815 / 27 / NCTC 11736).